The chain runs to 542 residues: Adenosylmethionine-8-amino-7-oxononanoate aminotransferase (542 aa).

170-171 (GS) lines the pyridoxal 5'-phosphate pocket. Tyrosine 205 serves as a coordination point for substrate. A pyridoxal 5'-phosphate-binding site is contributed by aspartate 311. Residues lysine 340, glycine 375, and arginine 470 each coordinate substrate. N6-(pyridoxal phosphate)lysine is present on lysine 340. A disordered region spans residues 509–542 (DGGLWTKRPDGPDNPDKANTPDTPDGARTGETVV). Basic and acidic residues predominate over residues 515-524 (KRPDGPDNPD).

It belongs to the class-III pyridoxal-phosphate-dependent aminotransferase family. BioA subfamily. As to quaternary structure, homodimer. Pyridoxal 5'-phosphate serves as cofactor.

The protein resides in the cytoplasm. It carries out the reaction (8S)-8-amino-7-oxononanoate + S-adenosyl-L-methionine = S-adenosyl-4-methylsulfanyl-2-oxobutanoate + (7R,8S)-7,8-diammoniononanoate. The protein operates within cofactor biosynthesis; biotin biosynthesis; 7,8-diaminononanoate from 8-amino-7-oxononanoate (SAM route): step 1/1. Its function is as follows. Catalyzes the transfer of the alpha-amino group from S-adenosyl-L-methionine (SAM) to 7-keto-8-aminopelargonic acid (KAPA) to form 7,8-diaminopelargonic acid (DAPA). It is the only aminotransferase known to utilize SAM as an amino donor. The sequence is that of Adenosylmethionine-8-amino-7-oxononanoate aminotransferase from Nitratidesulfovibrio vulgaris (strain ATCC 29579 / DSM 644 / CCUG 34227 / NCIMB 8303 / VKM B-1760 / Hildenborough) (Desulfovibrio vulgaris).